We begin with the raw amino-acid sequence, 508 residues long: Hydroxymethylglutaryl-CoA synthase, mitochondrial (508 aa).

Residues 1–37 (MQRLLAPARRVLQVKRAMQETSLTPAHLLSAAQQRFS) constitute a mitochondrion transit peptide. At Lys52 the chain carries N6-succinyllysine. Residues Glu80 and Ala81 each coordinate (3S)-3-hydroxy-3-methylglutaryl-CoA. Residues Lys83 and Lys118 each carry the N6-acetyllysine; alternate modification. 2 positions are modified to N6-succinyllysine; alternate: Lys83 and Lys118. Glu132 functions as the Proton donor/acceptor in the catalytic mechanism. Residues Cys166, Asn204, and Thr208 each contribute to the (3S)-3-hydroxy-3-methylglutaryl-CoA site. Residue Cys166 is the Acyl-thioester intermediate of the active site. Position 221 is an N6-succinyllysine (Lys221). Lys243 carries the N6-acetyllysine modification. An N6-acetyllysine; alternate modification is found at Lys256. Position 256 is an N6-succinyllysine; alternate (Lys256). (3S)-3-hydroxy-3-methylglutaryl-CoA-binding residues include Ser258 and His301. The active-site Proton donor/acceptor is His301. Position 306 is an N6-acetyllysine (Lys306). Position 310 (Lys310) interacts with (3S)-3-hydroxy-3-methylglutaryl-CoA. An N6-acetyllysine; alternate mark is found at Lys310 and Lys327. N6-succinyllysine; alternate is present on residues Lys310 and Lys327. Lys333 carries the post-translational modification N6-succinyllysine. An N6-acetyllysine; alternate mark is found at Lys342, Lys350, Lys354, and Lys358. N6-succinyllysine; alternate occurs at positions 342, 350, 354, and 358. Residues Asn380 and Ser414 each contribute to the (3S)-3-hydroxy-3-methylglutaryl-CoA site. Lys427 is modified (N6-acetyllysine). Position 433 is a phosphoserine (Ser433). The residue at position 437 (Lys437) is an N6-acetyllysine. Residue Ser440 is modified to Phosphoserine. Lys447 is modified (N6-acetyllysine; alternate). Lys447 bears the N6-succinyllysine; alternate mark. Ser456 carries the post-translational modification Phosphoserine. The residue at position 473 (Lys473) is an N6-acetyllysine; alternate. Position 473 is an N6-succinyllysine; alternate (Lys473). Position 477 is a phosphoserine (Ser477).

This sequence belongs to the thiolase-like superfamily. HMG-CoA synthase family. Homodimer. In terms of processing, acetylation of Lys-427 is observed in liver mitochondria from fasted mice but not from fed mice. Succinylated. Desuccinylated by SIRT5. Succinylation, at least at Lys-83 and Lys-310, inhibits the enzymatic activity. As to expression, liver and kidney.

The protein resides in the mitochondrion. The enzyme catalyses acetoacetyl-CoA + acetyl-CoA + H2O = (3S)-3-hydroxy-3-methylglutaryl-CoA + CoA + H(+). It functions in the pathway metabolic intermediate biosynthesis; (R)-mevalonate biosynthesis; (R)-mevalonate from acetyl-CoA: step 2/3. Functionally, catalyzes the first irreversible step in ketogenesis, condensing acetyl-CoA to acetoacetyl-CoA to form HMG-CoA, which is converted by HMG-CoA reductase (HMGCR) into mevalonate. In Mus musculus (Mouse), this protein is Hydroxymethylglutaryl-CoA synthase, mitochondrial (Hmgcs2).